The chain runs to 134 residues: Small ribosomal subunit protein uS11 (134 aa).

The protein belongs to the universal ribosomal protein uS11 family. As to quaternary structure, part of the 30S ribosomal subunit. Interacts with proteins S7 and S18. Binds to IF-3.

Functionally, located on the platform of the 30S subunit, it bridges several disparate RNA helices of the 16S rRNA. Forms part of the Shine-Dalgarno cleft in the 70S ribosome. The polypeptide is Small ribosomal subunit protein uS11 (Leptothrix cholodnii (strain ATCC 51168 / LMG 8142 / SP-6) (Leptothrix discophora (strain SP-6))).